Here is a 440-residue protein sequence, read N- to C-terminus: Asparagine--tRNA ligase (440 aa).

It belongs to the class-II aminoacyl-tRNA synthetase family. As to quaternary structure, homodimer.

It localises to the cytoplasm. The enzyme catalyses tRNA(Asn) + L-asparagine + ATP = L-asparaginyl-tRNA(Asn) + AMP + diphosphate + H(+). The chain is Asparagine--tRNA ligase from Roseiflexus sp. (strain RS-1).